The sequence spans 342 residues: Aspartate carbamoyltransferase catalytic subunit (342 aa).

Positions 54 and 55 each coordinate carbamoyl phosphate. Residue Lys82 participates in L-aspartate binding. The carbamoyl phosphate site is built by Arg104, His134, and Gln137. Arg177 and Arg232 together coordinate L-aspartate. Positions 277 and 278 each coordinate carbamoyl phosphate.

The protein belongs to the aspartate/ornithine carbamoyltransferase superfamily. ATCase family. As to quaternary structure, heterododecamer (2C3:3R2) of six catalytic PyrB chains organized as two trimers (C3), and six regulatory PyrI chains organized as three dimers (R2).

It carries out the reaction carbamoyl phosphate + L-aspartate = N-carbamoyl-L-aspartate + phosphate + H(+). It participates in pyrimidine metabolism; UMP biosynthesis via de novo pathway; (S)-dihydroorotate from bicarbonate: step 2/3. In terms of biological role, catalyzes the condensation of carbamoyl phosphate and aspartate to form carbamoyl aspartate and inorganic phosphate, the committed step in the de novo pyrimidine nucleotide biosynthesis pathway. This Pseudarthrobacter chlorophenolicus (strain ATCC 700700 / DSM 12829 / CIP 107037 / JCM 12360 / KCTC 9906 / NCIMB 13794 / A6) (Arthrobacter chlorophenolicus) protein is Aspartate carbamoyltransferase catalytic subunit.